The sequence spans 160 residues: Large ribosomal subunit protein bL17 (160 aa).

Residues 123–141 show a composition bias toward basic and acidic residues; sequence DEKRQKRAEARAKRREEMQ. Positions 123–160 are disordered; it reads DEKRQKRAEARAKRREEMQKAMAEQQQAEGGEPEGGNE. Residues 142–152 show a composition bias toward low complexity; it reads KAMAEQQQAEG.

It belongs to the bacterial ribosomal protein bL17 family. Part of the 50S ribosomal subunit. Contacts protein L32.

This Acidobacterium capsulatum (strain ATCC 51196 / DSM 11244 / BCRC 80197 / JCM 7670 / NBRC 15755 / NCIMB 13165 / 161) protein is Large ribosomal subunit protein bL17.